The primary structure comprises 204 residues: Thiamine-phosphate synthase (204 aa).

Residues 35 to 39 (QVREK) and Asn-67 contribute to the 4-amino-2-methyl-5-(diphosphooxymethyl)pyrimidine site. The Mg(2+) site is built by Asp-68 and Asp-87. A 4-amino-2-methyl-5-(diphosphooxymethyl)pyrimidine-binding site is contributed by Ser-106. 132–134 (TPT) contributes to the 2-[(2R,5Z)-2-carboxy-4-methylthiazol-5(2H)-ylidene]ethyl phosphate binding site. Lys-135 is a binding site for 4-amino-2-methyl-5-(diphosphooxymethyl)pyrimidine. 2-[(2R,5Z)-2-carboxy-4-methylthiazol-5(2H)-ylidene]ethyl phosphate-binding positions include Gly-163 and 183-184 (VS).

It belongs to the thiamine-phosphate synthase family. It depends on Mg(2+) as a cofactor.

The enzyme catalyses 2-[(2R,5Z)-2-carboxy-4-methylthiazol-5(2H)-ylidene]ethyl phosphate + 4-amino-2-methyl-5-(diphosphooxymethyl)pyrimidine + 2 H(+) = thiamine phosphate + CO2 + diphosphate. It catalyses the reaction 2-(2-carboxy-4-methylthiazol-5-yl)ethyl phosphate + 4-amino-2-methyl-5-(diphosphooxymethyl)pyrimidine + 2 H(+) = thiamine phosphate + CO2 + diphosphate. It carries out the reaction 4-methyl-5-(2-phosphooxyethyl)-thiazole + 4-amino-2-methyl-5-(diphosphooxymethyl)pyrimidine + H(+) = thiamine phosphate + diphosphate. Its pathway is cofactor biosynthesis; thiamine diphosphate biosynthesis; thiamine phosphate from 4-amino-2-methyl-5-diphosphomethylpyrimidine and 4-methyl-5-(2-phosphoethyl)-thiazole: step 1/1. Condenses 4-methyl-5-(beta-hydroxyethyl)thiazole monophosphate (THZ-P) and 2-methyl-4-amino-5-hydroxymethyl pyrimidine pyrophosphate (HMP-PP) to form thiamine monophosphate (TMP). This chain is Thiamine-phosphate synthase, found in Vibrio campbellii (strain ATCC BAA-1116).